The sequence spans 61 residues: Probable tautomerase SAV1363 (61 aa).

Proline 2 serves as the catalytic Proton acceptor; via imino nitrogen.

Belongs to the 4-oxalocrotonate tautomerase family.

This Staphylococcus aureus (strain Mu50 / ATCC 700699) protein is Probable tautomerase SAV1363.